Consider the following 513-residue polypeptide: Galactose-1-phosphate uridylyltransferase (513 aa).

This sequence belongs to the galactose-1-phosphate uridylyltransferase type 2 family.

The protein resides in the cytoplasm. It catalyses the reaction alpha-D-galactose 1-phosphate + UDP-alpha-D-glucose = alpha-D-glucose 1-phosphate + UDP-alpha-D-galactose. It functions in the pathway carbohydrate metabolism; galactose metabolism. The sequence is that of Galactose-1-phosphate uridylyltransferase (galT) from Bacillus subtilis (strain 168).